We begin with the raw amino-acid sequence, 142 residues long: Alpha-lactalbumin (142 aa).

The first 19 residues, 1 to 19 (MMSFVSLLLVGILFHATQA), serve as a signal peptide directing secretion. Positions 20–142 (EQLTKCEVFQ…KLDQWLCEKL (123 aa)) constitute a C-type lysozyme domain. Cystine bridges form between cysteine 25-cysteine 139, cysteine 47-cysteine 130, cysteine 80-cysteine 96, and cysteine 92-cysteine 110. Asparagine 64 and asparagine 93 each carry an N-linked (GlcNAc...) asparagine glycan. Residues lysine 98, aspartate 101, aspartate 103, aspartate 106, and aspartate 107 each contribute to the Ca(2+) site.

It belongs to the glycosyl hydrolase 22 family. In terms of assembly, lactose synthase (LS) is a heterodimer of a catalytic component, beta1,4-galactosyltransferase (beta4Gal-T1) and a regulatory component, alpha-lactalbumin (LA). In terms of tissue distribution, mammary gland specific. Secreted in milk.

It localises to the secreted. Functionally, regulatory subunit of lactose synthase, changes the substrate specificity of galactosyltransferase in the mammary gland making glucose a good acceptor substrate for this enzyme. This enables LS to synthesize lactose, the major carbohydrate component of milk. In other tissues, galactosyltransferase transfers galactose onto the N-acetylglucosamine of the oligosaccharide chains in glycoproteins. In Ovis aries (Sheep), this protein is Alpha-lactalbumin (LALBA).